The primary structure comprises 988 residues: Transposase for transposon Tn1546 (988 aa).

Belongs to the transposase 7 family.

Its function is as follows. Required for transposition of transposon Tn1546. This Enterococcus faecium (Streptococcus faecium) protein is Transposase for transposon Tn1546.